Consider the following 1128-residue polypeptide: Nck-associated protein 1 (1128 aa).

S2 carries the post-translational modification N-acetylserine. The interval 640-665 is disordered; sequence AVNKKSKKQTGKKGEPEREKPGVESM. Basic and acidic residues predominate over residues 651 to 665; the sequence is KKGEPEREKPGVESM. The chain crosses the membrane as a helical span at residues 995 to 1015; that stretch reads IACLLMVFVAVSLPTLASNVM.

It belongs to the HEM-1/HEM-2 family. In terms of assembly, component of the WAVE1 complex composed of ABI2, CYFIP1 or CYFIP2, BRK1, NCKAP1 and WASF1/WAVE1. Within the complex, a heterodimer containing NCKAP1 and CYFIP1 interacts with a heterotrimer formed by WAVE1, ABI2 and BRK1. Component of the WAVE2 complex composed of ABI1, CYFIP1/SRA1, NCKAP1/NAP1 and WASF2/WAVE2. CYFIP2 binds to activated RAC1 which causes the complex to dissociate, releasing activated WASF1. The complex can also be activated by NCK1. Associates preferentially with the first SH3 domain of NCK. Interacts with NYAP1, NYAP2 and MYO16. Interacts with TMEM132D. In terms of tissue distribution, preferentially expressed in brain, heart, liver and testis.

The protein resides in the cell membrane. The protein localises to the cell projection. Its subcellular location is the lamellipodium membrane. In terms of biological role, part of the WAVE complex that regulates lamellipodia formation. The WAVE complex regulates actin filament reorganization via its interaction with the Arp2/3 complex. Actin remodeling activity is regulated by RAC1. As component of the WAVE1 complex, required for BDNF-NTRK2 endocytic trafficking and signaling from early endosomes. The chain is Nck-associated protein 1 (Nckap1) from Rattus norvegicus (Rat).